A 490-amino-acid polypeptide reads, in one-letter code: MGSDLLWLILAIVVGTYVVLFGFLRRANEWYYSMKLGDKSRYLPPGDMGWPIIGNMIPYFKGFRSGEPESFIFDLFEKYGRKGIYRNHIFGSPSIIVLAPEACRQVFLDDDNFKMGYPESTNKLTFRGSFNTASKEGQRRIRKLATSPIRGHKAIAIYIDNIEDIVVKSMNEWASKDKPIEFLSEMRKATFKVIANIFLGSSSESVIGSVEQYYVDYANGLISPLAINLPGFAFHKAMKARDMLGEILEPILRERRSMKEKDQLKGKRGLVDLLMEVEDENGEKLEDVDIVDMLIAFLSAGHESSAHIATWAIIHLHRHPEMLQKARKEQEEIVKKRPASQQGFSIEDFKQMEYIAQVIDETLRITNLSSSSFREAEADVNLQGYIIPKGWKVLLYNRGVHRNPENYPNPKEFDPSRWDNRANRPGYFIPFGGGPRICPGADLAKLEMSIFIHYFLLNYRLEPLNPECPTEYLPVPRPSDQCLARIVKLK.

A helical transmembrane segment spans residues D4–L24. C438 lines the heme pocket.

It belongs to the cytochrome P450 family. Heme is required as a cofactor. In terms of tissue distribution, mainly expressed in petioles and, to a lower extent, in roots.

Its subcellular location is the membrane. It catalyses the reaction (21S)-21-acetoxyl-apo-melianone + reduced [NADPH--hemoprotein reductase] + O2 = (21S)-21-acetyl-1-hydroxy-apo-melianone + oxidized [NADPH--hemoprotein reductase] + H2O + H(+). Its pathway is secondary metabolite biosynthesis; terpenoid biosynthesis. In terms of biological role, monooxygenase involved in the biosynthesis of limonoids triterpene natural products such as azadirachtin, an antifeedant widely used as bioinsecticide, and possessing many medicinal applications including anti-tumoral, anti-malarial, anti-rheumatic, antibacterial, anti-inflammatory, anti-pyretic and diuretic effects. Catalyzes the conversion of (21S)-21-acetoxyl-apo-melianone to (21S)-21-acetyl-1-hydroxy-apo-melianone. The sequence is that of (21S)-21-acetyl-1-hydroxy-apo-melianone synthase CYP88A164 from Melia azedarach (Chinaberry tree).